Consider the following 699-residue polypeptide: DNA topoisomerase 1 (699 aa).

Composition is skewed to basic and acidic residues over residues 1–15 (MAKSKVVEKDKKNEL) and 22–35 (IELKGQSKNEESKG). Residues 1–37 (MAKSKVVEKDKKNELDNQSADIELKGQSKNEESKGGK) are disordered. The Toprim domain maps to 38-146 (KKVIIVESPA…NIITFTEITE (109 aa)). Mg(2+) contacts are provided by E44 and D115. The region spanning 160–583 (DMNKVNAQLA…SFLKEFNKDL (424 aa)) is the Topo IA-type catalytic domain. The interval 194–199 (SAGRVQ) is interaction with DNA. The active-site O-(5'-phospho-DNA)-tyrosine intermediate is the Y324. The segment at 601–624 (CEDCSGNYKLKVGKYGLYLHCPNC) adopts a C4-type zinc-finger fold. Residues 649–699 (QESQEENGEKNSVQSEESSANSGNRKFYRKRRTSGSKKSSTKSASSKAKKK) form a disordered region. Residues 661-672 (VQSEESSANSGN) show a composition bias toward polar residues. Basic residues predominate over residues 674-683 (KFYRKRRTSG). The segment covering 684–699 (SKKSSTKSASSKAKKK) has biased composition (low complexity).

Belongs to the type IA topoisomerase family. Monomer. It depends on Mg(2+) as a cofactor.

The enzyme catalyses ATP-independent breakage of single-stranded DNA, followed by passage and rejoining.. In terms of biological role, releases the supercoiling and torsional tension of DNA, which is introduced during the DNA replication and transcription, by transiently cleaving and rejoining one strand of the DNA duplex. Introduces a single-strand break via transesterification at a target site in duplex DNA. The scissile phosphodiester is attacked by the catalytic tyrosine of the enzyme, resulting in the formation of a DNA-(5'-phosphotyrosyl)-enzyme intermediate and the expulsion of a 3'-OH DNA strand. The free DNA strand then undergoes passage around the unbroken strand, thus removing DNA supercoils. Finally, in the religation step, the DNA 3'-OH attacks the covalent intermediate to expel the active-site tyrosine and restore the DNA phosphodiester backbone. The protein is DNA topoisomerase 1 of Fervidobacterium islandicum.